The chain runs to 297 residues: UDP-N-acetylglucosamine transporter TMEM241 (297 aa).

10 consecutive transmembrane segments (helical) span residues 7-29 (LLGL…VLSV), 32-52 (FTYP…LLHM), 69-89 (VLIW…GSKA), 93-113 (LAVP…CGYQ), 121-141 (TSLS…CLPF), 146-166 (FDPD…SYKI), 187-207 (IFSM…FGAL), 211-231 (FLYF…GFFL), 250-270 (WILC…DMAL), and 271-291 (TKAT…LVFS).

This sequence belongs to the nucleotide-sugar transporter family. SLC35A subfamily. In terms of tissue distribution, widely expressed with high expression in lung.

The protein localises to the golgi apparatus. It localises to the cis-Golgi network membrane. Functionally, golgi-localized UDP-N-acetylglucosamine (UDP-GlcNAc) transporter that transports UDP-N-acetylglucosamine into Golgi lumen. Contributes to lysosomal targeting of NPC2, a key protein required for lysosomal cholesterol exiting, and that utilizes the mannose-6-phosphate (M6P) modification pathway for its lysosomal targeting. The sequence is that of UDP-N-acetylglucosamine transporter TMEM241 (Tmem241) from Mus musculus (Mouse).